A 418-amino-acid chain; its full sequence is NADH-quinone oxidoreductase subunit D (418 aa).

The protein belongs to the complex I 49 kDa subunit family. NDH-1 is composed of 14 different subunits. Subunits NuoB, C, D, E, F, and G constitute the peripheral sector of the complex.

Its subcellular location is the cell inner membrane. The enzyme catalyses a quinone + NADH + 5 H(+)(in) = a quinol + NAD(+) + 4 H(+)(out). Functionally, NDH-1 shuttles electrons from NADH, via FMN and iron-sulfur (Fe-S) centers, to quinones in the respiratory chain. The immediate electron acceptor for the enzyme in this species is believed to be ubiquinone. Couples the redox reaction to proton translocation (for every two electrons transferred, four hydrogen ions are translocated across the cytoplasmic membrane), and thus conserves the redox energy in a proton gradient. This is NADH-quinone oxidoreductase subunit D from Neisseria gonorrhoeae (strain ATCC 700825 / FA 1090).